The following is a 257-amino-acid chain: Snake venom serine protease KN1 (257 aa).

An N-terminal signal peptide occupies residues 1–18; that stretch reads MVLIRVLANLLILQLSYA. A propeptide spanning residues 19–24 is cleaved from the precursor; the sequence is QKSSEL. Residues 25-248 form the Peptidase S1 domain; that stretch reads VVGGHPCNIN…HLDWIKSIIA (224 aa). 5 disulfide bridges follow: Cys31–Cys162, Cys49–Cys65, Cys141–Cys209, Cys173–Cys188, and Cys199–Cys224. The active-site Charge relay system is His64. A glycan (N-linked (GlcNAc...) asparagine) is linked at Asn102. The active-site Charge relay system is the Asp109. N-linked (GlcNAc...) asparagine glycans are attached at residues Asn120 and Asn121. Ser203 serves as the catalytic Charge relay system.

Belongs to the peptidase S1 family. Snake venom subfamily. In terms of assembly, monomer. In terms of tissue distribution, expressed by the venom gland.

It localises to the secreted. Its function is as follows. Snake venom serine protease that may act in the hemostasis system of the prey. In Trimeresurus stejnegeri (Chinese green tree viper), this protein is Snake venom serine protease KN1.